Here is a 445-residue protein sequence, read N- to C-terminus: Tubulin beta-5 chain (445 aa).

GTP is bound by residues glutamine 11, glutamate 69, serine 138, glycine 142, threonine 143, glycine 144, asparagine 204, and asparagine 226. Mg(2+) is bound at residue glutamate 69. Positions 420-445 (AEYQQYQDATADDEYEEGEEEEEEAA) are disordered. Positions 429–445 (TADDEYEEGEEEEEEAA) are enriched in acidic residues.

Belongs to the tubulin family. In terms of assembly, dimer of alpha and beta chains. A typical microtubule is a hollow water-filled tube with an outer diameter of 25 nm and an inner diameter of 15 nM. Alpha-beta heterodimers associate head-to-tail to form protofilaments running lengthwise along the microtubule wall with the beta-tubulin subunit facing the microtubule plus end conferring a structural polarity. Microtubules usually have 13 protofilaments but different protofilament numbers can be found in some organisms and specialized cells. It depends on Mg(2+) as a cofactor.

It localises to the cytoplasm. Its subcellular location is the cytoskeleton. Its function is as follows. Tubulin is the major constituent of microtubules, a cylinder consisting of laterally associated linear protofilaments composed of alpha- and beta-tubulin heterodimers. Microtubules grow by the addition of GTP-tubulin dimers to the microtubule end, where a stabilizing cap forms. Below the cap, tubulin dimers are in GDP-bound state, owing to GTPase activity of alpha-tubulin. In Gossypium hirsutum (Upland cotton), this protein is Tubulin beta-5 chain.